We begin with the raw amino-acid sequence, 922 residues long: Isoleucine--tRNA ligase (922 aa).

Residues 57–67 carry the 'HIGH' region motif; the sequence is PYANGDIHLGH. L-isoleucyl-5'-AMP is bound at residue glutamate 553. Residues 594-598 carry the 'KMSKS' region motif; sequence KMSKS. Residue lysine 597 coordinates ATP. Zn(2+) contacts are provided by cysteine 892, cysteine 895, cysteine 912, and cysteine 915.

Belongs to the class-I aminoacyl-tRNA synthetase family. IleS type 1 subfamily. As to quaternary structure, monomer. Zn(2+) serves as cofactor.

The protein localises to the cytoplasm. It carries out the reaction tRNA(Ile) + L-isoleucine + ATP = L-isoleucyl-tRNA(Ile) + AMP + diphosphate. Functionally, catalyzes the attachment of isoleucine to tRNA(Ile). As IleRS can inadvertently accommodate and process structurally similar amino acids such as valine, to avoid such errors it has two additional distinct tRNA(Ile)-dependent editing activities. One activity is designated as 'pretransfer' editing and involves the hydrolysis of activated Val-AMP. The other activity is designated 'posttransfer' editing and involves deacylation of mischarged Val-tRNA(Ile). In Desulfitobacterium hafniense (strain Y51), this protein is Isoleucine--tRNA ligase.